The following is a 497-amino-acid chain: Virion host shutoff protein (497 aa).

2 disordered regions span residues 122 to 142 (EHDTEFQEDPEENDVSVPPQD) and 280 to 373 (SVIS…SAEA). The segment covering 309 to 326 (PNERRVISWRRQDDHDYD) has biased composition (basic and acidic residues). Residues 327–344 (SSTEDSDQSDSSEEEEEC) are compositionally biased toward acidic residues.

Belongs to the herpesviridae VHS protein family.

The protein resides in the virion. Minor structural protein that acts as an endoribonuclease during lytic infection. Degrades host mRNAs in the cytoplasm by cutting them at preferred sites, including some in regions of translation initiation. The sequence is that of Virion host shutoff protein from Equine herpesvirus 1 (strain Ab4p) (EHV-1).